Here is a 295-residue protein sequence, read N- to C-terminus: Pyridoxal 5'-phosphate synthase subunit PdxS (295 aa).

A D-ribose 5-phosphate-binding site is contributed by Asp-25. Lys-82 acts as the Schiff-base intermediate with D-ribose 5-phosphate in catalysis. Position 154 (Gly-154) interacts with D-ribose 5-phosphate. D-glyceraldehyde 3-phosphate is bound at residue Arg-166. D-ribose 5-phosphate contacts are provided by residues Gly-215 and 236 to 237; that span reads GS.

Belongs to the PdxS/SNZ family. As to quaternary structure, in the presence of PdxT, forms a dodecamer of heterodimers.

It catalyses the reaction aldehydo-D-ribose 5-phosphate + D-glyceraldehyde 3-phosphate + L-glutamine = pyridoxal 5'-phosphate + L-glutamate + phosphate + 3 H2O + H(+). Its pathway is cofactor biosynthesis; pyridoxal 5'-phosphate biosynthesis. Catalyzes the formation of pyridoxal 5'-phosphate from ribose 5-phosphate (RBP), glyceraldehyde 3-phosphate (G3P) and ammonia. The ammonia is provided by the PdxT subunit. Can also use ribulose 5-phosphate and dihydroxyacetone phosphate as substrates, resulting from enzyme-catalyzed isomerization of RBP and G3P, respectively. This chain is Pyridoxal 5'-phosphate synthase subunit PdxS, found in Listeria welshimeri serovar 6b (strain ATCC 35897 / DSM 20650 / CCUG 15529 / CIP 8149 / NCTC 11857 / SLCC 5334 / V8).